The following is an 81-amino-acid chain: Tissue- and phase-specific nuclear protein (81 aa).

As to expression, expressed in oviduct, where expression levels are higher in uterine sections than in tuba sections. No expression detected in small intestine and liver (at protein level).

The protein resides in the nucleus. In Podarcis siculus (Italian wall lizard), this protein is Tissue- and phase-specific nuclear protein.